The sequence spans 233 residues: 7-cyano-7-deazaguanine synthase (233 aa).

Position 7-17 (7-17 (LSGGLDSAVTS)) interacts with ATP. Residues Cys-195, Cys-206, Cys-209, and Cys-212 each coordinate Zn(2+).

This sequence belongs to the QueC family. Zn(2+) serves as cofactor.

The catalysed reaction is 7-carboxy-7-deazaguanine + NH4(+) + ATP = 7-cyano-7-deazaguanine + ADP + phosphate + H2O + H(+). It functions in the pathway purine metabolism; 7-cyano-7-deazaguanine biosynthesis. In terms of biological role, catalyzes the ATP-dependent conversion of 7-carboxy-7-deazaguanine (CDG) to 7-cyano-7-deazaguanine (preQ(0)). The protein is 7-cyano-7-deazaguanine synthase of Methanococcus maripaludis (strain C5 / ATCC BAA-1333).